A 485-amino-acid chain; its full sequence is MAEAAAPGTTVTTSGAGAAAAEAAETAEAVSPTPIPTVTAPSPRAGGGVGGSDGSDGSGGRGDSGAYDGSGACGGSDACDGSGDSSGDSWTKQVTCRYFKYGICKEGDNCRYSHDLSDRLCGVVCKYFQRGCCVYGDRCRCEHSKPLKQEEATATELTTKSSLAASSSLSSIVGPLVEMNTNEAESRNSNFATVVAGSEDWANAIEFVPGQPYCGRTVPSCTEAPLQGSVTKEESEEEQTAVETKKQLCPYAAVGQCRYGENCVYLHGDLCDMCGLQVLHPMDAAQRSQHIQACIEAHEKDMEFSFAVQRSKDKVCGICMEVVYEKANPNEHRFGILSNCNHTFCLKCIRKWRSAKEFESRIVKSCPQCRITSNFVIPSEYWVEEKEEKQKLIQKYKEAMSNKACKYFDEGRGSCPFGENCFYKHMYPDGRREEPQRQQVGTSSRNPGQQRNHFWEFFEEGANSNPFDDEEEAVTFELGEMLLML.

Residues 1–32 (MAEAAAPGTTVTTSGAGAAAAEAAETAEAVSP) are compositionally biased toward low complexity. The segment at 1 to 63 (MAEAAAPGTT…GSDGSGGRGD (63 aa)) is disordered. Residues 45–63 (AGGGVGGSDGSDGSGGRGD) show a composition bias toward gly residues. 3 consecutive C3H1-type zinc fingers follow at residues 90–117 (WTKQVTCRYFKYGICKEGDNCRYSHDLS), 124–146 (VCKYFQRGCCVYGDRCRCEHSKP), and 243–270 (ETKKQLCPYAAVGQCRYGENCVYLHGDL). The tract at residues 271 to 298 (CDMCGLQVLHPMDAAQRSQHIQACIEAH) is makorin-type Cys-His. The RING-type zinc finger occupies 316-370 (CGICMEVVYEKANPNEHRFGILSNCNHTFCLKCIRKWRSAKEFESRIVKSCPQCR). The C3H1-type 4 zinc-finger motif lies at 399-428 (AMSNKACKYFDEGRGSCPFGENCFYKHMYP).

It carries out the reaction S-ubiquitinyl-[E2 ubiquitin-conjugating enzyme]-L-cysteine + [acceptor protein]-L-lysine = [E2 ubiquitin-conjugating enzyme]-L-cysteine + N(6)-ubiquitinyl-[acceptor protein]-L-lysine.. It participates in protein modification; protein ubiquitination. Its function is as follows. May act as a E3 ubiquitin ligase catalyzing the covalent attachment of ubiquitin moieties onto substrate proteins. The chain is Putative E3 ubiquitin-protein ligase makorin-4 (MKRN4P) from Homo sapiens (Human).